Reading from the N-terminus, the 272-residue chain is Shikimate dehydrogenase (NADP(+)) (272 aa).

Shikimate is bound by residues serine 14 to serine 16 and threonine 61. The active-site Proton acceptor is lysine 65. Glutamate 77 provides a ligand contact to NADP(+). Residues asparagine 86 and aspartate 102 each coordinate shikimate. NADP(+) contacts are provided by residues glycine 126–alanine 130, asparagine 149–arginine 154, and methionine 213. Residue tyrosine 215 participates in shikimate binding. Glycine 237 contacts NADP(+).

The protein belongs to the shikimate dehydrogenase family. Homodimer.

It catalyses the reaction shikimate + NADP(+) = 3-dehydroshikimate + NADPH + H(+). It functions in the pathway metabolic intermediate biosynthesis; chorismate biosynthesis; chorismate from D-erythrose 4-phosphate and phosphoenolpyruvate: step 4/7. Its function is as follows. Involved in the biosynthesis of the chorismate, which leads to the biosynthesis of aromatic amino acids. Catalyzes the reversible NADPH linked reduction of 3-dehydroshikimate (DHSA) to yield shikimate (SA). This Escherichia coli O157:H7 protein is Shikimate dehydrogenase (NADP(+)).